Here is a 511-residue protein sequence, read N- to C-terminus: Probable DNA ligase (511 aa).

E208 is an ATP binding site. Catalysis depends on K210, which acts as the N6-AMP-lysine intermediate. R215, R230, E259, F299, R377, and K383 together coordinate ATP.

The protein belongs to the ATP-dependent DNA ligase family. Mg(2+) is required as a cofactor.

It carries out the reaction ATP + (deoxyribonucleotide)n-3'-hydroxyl + 5'-phospho-(deoxyribonucleotide)m = (deoxyribonucleotide)n+m + AMP + diphosphate.. Its function is as follows. DNA ligase that seals nicks in double-stranded DNA during DNA replication, DNA recombination and DNA repair. In Streptomyces griseus subsp. griseus (strain JCM 4626 / CBS 651.72 / NBRC 13350 / KCC S-0626 / ISP 5235), this protein is Probable DNA ligase.